A 400-amino-acid chain; its full sequence is Chalcone synthase 7 (400 aa).

Residue Cys-168 is part of the active site.

It belongs to the thiolase-like superfamily. Chalcone/stilbene synthases family.

The catalysed reaction is (E)-4-coumaroyl-CoA + 3 malonyl-CoA + 3 H(+) = 2',4,4',6'-tetrahydroxychalcone + 3 CO2 + 4 CoA. It participates in secondary metabolite biosynthesis; flavonoid biosynthesis. In terms of biological role, the primary product of this enzyme is 4,2',4',6'-tetrahydroxychalcone (also termed naringenin-chalcone or chalcone) which can under specific conditions spontaneously isomerize into naringenin. The polypeptide is Chalcone synthase 7 (CHS7) (Sorghum bicolor (Sorghum)).